A 322-amino-acid chain; its full sequence is Acetyl-coenzyme A carboxylase carboxyl transferase subunit alpha (322 aa).

The region spanning 30–293 is the CoA carboxyltransferase C-terminal domain; it reads ALDISAEIAR…KQTLQESLRK (264 aa).

It belongs to the AccA family. As to quaternary structure, acetyl-CoA carboxylase is a heterohexamer composed of biotin carboxyl carrier protein (AccB), biotin carboxylase (AccC) and two subunits each of ACCase subunit alpha (AccA) and ACCase subunit beta (AccD).

The protein localises to the cytoplasm. The enzyme catalyses N(6)-carboxybiotinyl-L-lysyl-[protein] + acetyl-CoA = N(6)-biotinyl-L-lysyl-[protein] + malonyl-CoA. It functions in the pathway lipid metabolism; malonyl-CoA biosynthesis; malonyl-CoA from acetyl-CoA: step 1/1. Component of the acetyl coenzyme A carboxylase (ACC) complex. First, biotin carboxylase catalyzes the carboxylation of biotin on its carrier protein (BCCP) and then the CO(2) group is transferred by the carboxyltransferase to acetyl-CoA to form malonyl-CoA. This chain is Acetyl-coenzyme A carboxylase carboxyl transferase subunit alpha, found in Nitrosomonas europaea (strain ATCC 19718 / CIP 103999 / KCTC 2705 / NBRC 14298).